Consider the following 153-residue polypeptide: Movement protein (153 aa).

Disordered regions lie at residues 1 to 24 and 121 to 153; these read MAQE…EQDP and PWVA…RNQR. The span at 121–138 shows a compositional bias: polar residues; that stretch reads PWVATLIPSQSAGPPQRS.

It belongs to the luteoviruses movement protein family.

Functionally, transports viral genome to neighboring plant cells directly through plasmosdesmata, without any budding. The movement protein allows efficient cell to cell propagation, by bypassing the host cell wall barrier. The chain is Movement protein from Avena byzantina (Oat).